The following is a 267-amino-acid chain: Mannose-specific lectin 1 (267 aa).

Positions 1-26 (MAKLLLFLLPAILGLLVPPRSWSAVA) are cleaved as a signal peptide. Bulb-type lectin domains follow at residues 29–134 (TNYL…PSVP) and 148–255 (NNLL…PQAK). Beta-D-mannose-binding positions include 54 to 58 (QDDCN), Tyr62, Trp66, Gln67, 173 to 177 (QGDCN), Tyr181, and 185 to 188 (YGWQ). Positions 54 to 62 (QDDCNLVLY) match the Carbohydrate-binding motif 1 motif. 2 disulfides stabilise this stretch: Cys57-Cys77 and Cys176-Cys198. A Carbohydrate-binding motif 2 motif is present at residues 173 to 181 (QGDCNLVLY).

As to quaternary structure, forms heterotetramer of 2 chains 1 and 2 chains 2 arranged as a dimer of chain 1 and chain 2 heterodimers.

The protein localises to the secreted. Mannose-specific lectin. Shows agglutinating activity towards erythrocytes from rabbit. This is Mannose-specific lectin 1 from Colocasia esculenta (Wild taro).